The chain runs to 210 residues: Somatotropin (210 aa).

The first 22 residues, 1-22 (MGQVFLLMPVLLVSCFLSHGAA), serve as a signal peptide directing secretion. Residue histidine 38 coordinates Zn(2+). The cysteines at positions 71 and 183 are disulfide-linked. Glutamate 192 contributes to the Zn(2+) binding site. A disulfide bond links cysteine 200 and cysteine 208.

This sequence belongs to the somatotropin/prolactin family.

The protein localises to the secreted. Functionally, growth hormone plays an important role in growth control and is involved in the regulation of several anabolic processes. Implicated as an osmoregulatory substance important for seawater adaptation. The protein is Somatotropin (gh) of Oncorhynchus masou (Cherry salmon).